Here is a 590-residue protein sequence, read N- to C-terminus: Multidrug and toxin extrusion protein 1 (590 aa).

The Cytoplasmic segment spans residues 1-59 (MDSITSYNVTQMNGDTKQEKCDDVLSTSSTQKFCGGCRKKLRSLLPVNYKTEIVELLKL). Residues 60 to 80 (AGPVFISQLMIFLISFVSTVF) form a helical membrane-spanning segment. Residues 81 to 88 (CGHLGKTE) are Extracellular-facing. A helical membrane pass occupies residues 89–109 (LAGVALAIAVINVTGISIGSG). Topologically, residues 110–137 (LASACDTLISQTFGSNNLKRVGVILQRG) are cytoplasmic. A helical membrane pass occupies residues 138–158 (ILILLLACFPCWALLINTEPI). The Extracellular portion of the chain corresponds to 159–167 (LLAVRQSPN). Residues 168–188 (VASLSQLYVKIFMPALPAAFM) form a helical membrane-spanning segment. Residues 189–199 (YQLQGRYLQNQ) lie on the Cytoplasmic side of the membrane. A helical transmembrane segment spans residues 200 to 222 (GIIWPQVITGAAGNILNALINYV). Residues 223–231 (FLHLLELGV) lie on the Extracellular side of the membrane. The helical transmembrane segment at 232 to 254 (AGSAAANTISQYSLAVFLYVYIR) threads the bilayer. The Cytoplasmic segment spans residues 255-274 (WKNLHKATWDGWSRDCLQEW). Residues 275–294 (GAFIRLALPSMLMLCVEWWT) form a helical membrane-spanning segment. Residues 295-313 (YEIGGFLAGLISETELGAQ) lie on the Extracellular side of the membrane. The helical transmembrane segment at 314-334 (SVVYELATIAYMFPLGFAVAA) threads the bilayer. The Cytoplasmic segment spans residues 335-351 (SVRVGNALGAGNTERAK). A helical membrane pass occupies residues 352 to 372 (LSAKVALVCGVLVSCVVATLI). Residues 373 to 395 (GCTKDVIAYIFTTEEEIVSRVSQ) are Extracellular-facing. A helical membrane pass occupies residues 396–416 (VMIMYGFFHLFDAIAGITGGI). The Cytoplasmic segment spans residues 417 to 430 (VRGAGKQLLGALCN). Residues 431 to 451 (IVGYYFVGFPTGVSLMFALSM) traverse the membrane as a helical segment. Position 452 (Gly-452) is a topological domain, extracellular. The chain crosses the membrane as a helical span at residues 453 to 473 (IIGLWIGFFGCVFLQSLFFII). The Cytoplasmic portion of the chain corresponds to 474-565 (LIYKLDWKKA…TTKQLIVRRG (92 aa)). The helical transmembrane segment at 566–586 (LAVLLMVLILAGGIVLNEMLV) threads the bilayer. Topologically, residues 587–590 (RYLR) are extracellular.

This sequence belongs to the multi antimicrobial extrusion (MATE) (TC 2.A.66.1) family.

It localises to the cell membrane. Functionally, solute transporter for tetraethylammonium (TEA), cimetidine, metformin, guanidine, N-methylnicotinamide (NMN) and also the zwitterionic cephalosporin cephalexin. Responsible for the secretion of cationic drugs across the brush border membranes. This Danio rerio (Zebrafish) protein is Multidrug and toxin extrusion protein 1 (slc47a1).